The sequence spans 410 residues: Cathepsin D (410 aa).

Positions 1–20 are cleaved as a signal peptide; sequence MKTPGVLLLILGLLASSSFA. A propeptide spans 21–64 (activation peptide); sequence IIRIPLRKFTSIRRTMTEVGGSVEDLILKGPITKYSMQSSPKTT. The Peptidase A1 domain occupies 79 to 405; that stretch reads YYGDIGIGTP…DRDNNRVGFA (327 aa). 2 disulfide bridges follow: C91-C160 and C110-C117. The active site involves D97. A glycan (N-linked (GlcNAc...) asparagine) is linked at N134. N261 carries an N-linked (GlcNAc...) (high mannose) asparagine glycan. Residues C284 and C288 are joined by a disulfide bond. Residue D293 is part of the active site. Residues C327 and C364 are joined by a disulfide bond.

The protein belongs to the peptidase A1 family. As to quaternary structure, consists of a light chain and a heavy chain. Interacts with ADAM30; this leads to activation of CTSD. Interacts with GRN; stabilizes CTSD; increases its proteolytic activity. In terms of processing, N- and O-glycosylated. Undergoes proteolytic cleavage and activation by ADAM30.

It is found in the lysosome. It localises to the melanosome. The protein resides in the secreted. The protein localises to the extracellular space. The catalysed reaction is Specificity similar to, but narrower than, that of pepsin A. Does not cleave the 4-Gln-|-His-5 bond in B chain of insulin.. In terms of biological role, acid protease active in intracellular protein breakdown. Plays a role in APP processing following cleavage and activation by ADAM30 which leads to APP degradation. The chain is Cathepsin D (Ctsd) from Mus musculus (Mouse).